Here is a 232-residue protein sequence, read N- to C-terminus: Large ribosomal subunit protein uL1 (232 aa).

It belongs to the universal ribosomal protein uL1 family. Part of the 50S ribosomal subunit.

In terms of biological role, binds directly to 23S rRNA. The L1 stalk is quite mobile in the ribosome, and is involved in E site tRNA release. Functionally, protein L1 is also a translational repressor protein, it controls the translation of the L11 operon by binding to its mRNA. The polypeptide is Large ribosomal subunit protein uL1 (Chelativorans sp. (strain BNC1)).